Reading from the N-terminus, the 423-residue chain is Gamma-glutamyl phosphate reductase (423 aa).

Belongs to the gamma-glutamyl phosphate reductase family.

It is found in the cytoplasm. It carries out the reaction L-glutamate 5-semialdehyde + phosphate + NADP(+) = L-glutamyl 5-phosphate + NADPH + H(+). The protein operates within amino-acid biosynthesis; L-proline biosynthesis; L-glutamate 5-semialdehyde from L-glutamate: step 2/2. Functionally, catalyzes the NADPH-dependent reduction of L-glutamate 5-phosphate into L-glutamate 5-semialdehyde and phosphate. The product spontaneously undergoes cyclization to form 1-pyrroline-5-carboxylate. This is Gamma-glutamyl phosphate reductase from Paraburkholderia xenovorans (strain LB400).